A 251-amino-acid chain; its full sequence is Dihydroorotate dehydrogenase B (NAD(+)), electron transfer subunit homolog (251 aa).

The FAD-binding FR-type domain maps to 2-101; sequence LAELNAEVLE…FLPLGKRLFS (100 aa). C217, C222, C225, and C238 together coordinate [2Fe-2S] cluster.

The protein belongs to the PyrK family. It depends on [2Fe-2S] cluster as a cofactor. FAD serves as cofactor.

The sequence is that of Dihydroorotate dehydrogenase B (NAD(+)), electron transfer subunit homolog from Aquifex aeolicus (strain VF5).